The following is a 263-amino-acid chain: Hydroxyethylthiazole kinase (263 aa).

Met-39 is a binding site for substrate. Residues Lys-115 and Thr-160 each coordinate ATP. Residue Gly-187 coordinates substrate.

This sequence belongs to the Thz kinase family. Mg(2+) serves as cofactor.

The enzyme catalyses 5-(2-hydroxyethyl)-4-methylthiazole + ATP = 4-methyl-5-(2-phosphooxyethyl)-thiazole + ADP + H(+). It functions in the pathway cofactor biosynthesis; thiamine diphosphate biosynthesis; 4-methyl-5-(2-phosphoethyl)-thiazole from 5-(2-hydroxyethyl)-4-methylthiazole: step 1/1. Its function is as follows. Catalyzes the phosphorylation of the hydroxyl group of 4-methyl-5-beta-hydroxyethylthiazole (THZ). The polypeptide is Hydroxyethylthiazole kinase (Staphylococcus aureus (strain COL)).